Reading from the N-terminus, the 468-residue chain is MTNAKTLYQKVWDAHIVAAPEGEAPVIYVDRHLVHEVTSPQAFSGLKVAGRKLRAPEKTFATMDHNTSTRSASLDALSPMARTQVETLAQNCKDFGVRLYDIHHPNQGIVHVMGPELGITLPGTVIVCGDSHTATHGAFGALAFGIGTSEVEHVLATQTLRQLKAKTMKIEVRGHVTDGVTAKDIVLAIIGKIGMDGGTGYVVEFCGEAIEALSMEGRMTVCNMAIEMGAKAGMVAPDQTTFDYLAGREFAPKGEDWAEAVAYWKAIKTDDGAVFDAIVELDAADIAPQLTWGTNPGQVVAIDGKVPDPINEANPSTRASMEKALEYIGLSAGTPMTDISINKVFIGSCTNSRIEDLRSAAVHAKGRKVASGVTAIVVPGSGQVKAQAEAEGLDKIFIEAGFEWRLPGCSMCLAMNDDRLEAGDRCASTSNRNFEGRQGRGSRTHLVSPAMAAAAAVAGHFVDIRKPY.

Positions 349, 409, and 412 each coordinate [4Fe-4S] cluster.

The protein belongs to the aconitase/IPM isomerase family. LeuC type 1 subfamily. In terms of assembly, heterodimer of LeuC and LeuD. It depends on [4Fe-4S] cluster as a cofactor.

It catalyses the reaction (2R,3S)-3-isopropylmalate = (2S)-2-isopropylmalate. The protein operates within amino-acid biosynthesis; L-leucine biosynthesis; L-leucine from 3-methyl-2-oxobutanoate: step 2/4. Functionally, catalyzes the isomerization between 2-isopropylmalate and 3-isopropylmalate, via the formation of 2-isopropylmaleate. The polypeptide is 3-isopropylmalate dehydratase large subunit (Shewanella baltica (strain OS185)).